The primary structure comprises 328 residues: NADH-quinone oxidoreductase subunit H 2 (328 aa).

8 helical membrane passes run 3–23, 77–97, 119–139, 165–185, 191–211, 250–270, 272–292, and 307–327; these read LIVA…ILLL, FLFK…FAAI, VALL…IFGG, MGFA…LDIV, VWNV…GLAE, MVLV…GVLI, LPPL…FMWF, and IGWK…GVVF.

Belongs to the complex I subunit 1 family. In terms of assembly, NDH-1 is composed of 14 different subunits. Subunits NuoA, H, J, K, L, M, N constitute the membrane sector of the complex.

It localises to the cell inner membrane. The enzyme catalyses a quinone + NADH + 5 H(+)(in) = a quinol + NAD(+) + 4 H(+)(out). NDH-1 shuttles electrons from NADH, via FMN and iron-sulfur (Fe-S) centers, to quinones in the respiratory chain. The immediate electron acceptor for the enzyme in this species is believed to be ubiquinone. Couples the redox reaction to proton translocation (for every two electrons transferred, four hydrogen ions are translocated across the cytoplasmic membrane), and thus conserves the redox energy in a proton gradient. This subunit may bind ubiquinone. The polypeptide is NADH-quinone oxidoreductase subunit H 2 (Rhizobium meliloti (strain 1021) (Ensifer meliloti)).